The primary structure comprises 109 residues: Cyclic di-AMP receptor A (109 aa).

Positions 21, 25, 28, 35, 36, 37, 41, 47, 92, and 94 each coordinate 3',3'-c-di-AMP.

In terms of assembly, homotrimer.

It localises to the cytoplasm. Functionally, binds cyclic di-AMP (c-di-AMP) and is probably involved in c-di-AMP-mediated signaling pathways. In vitro, can also bind cyclic GMP-AMP (3'3'-cGAMP), with lower affinity, but not c-di-GMP or 2'3'-cGAMP. The polypeptide is Cyclic di-AMP receptor A (Bacillus subtilis (strain 168)).